The following is a 372-amino-acid chain: Aminomethyltransferase (372 aa).

The protein belongs to the GcvT family. The glycine cleavage system is composed of four proteins: P, T, L and H.

The catalysed reaction is N(6)-[(R)-S(8)-aminomethyldihydrolipoyl]-L-lysyl-[protein] + (6S)-5,6,7,8-tetrahydrofolate = N(6)-[(R)-dihydrolipoyl]-L-lysyl-[protein] + (6R)-5,10-methylene-5,6,7,8-tetrahydrofolate + NH4(+). In terms of biological role, the glycine cleavage system catalyzes the degradation of glycine. In Burkholderia multivorans (strain ATCC 17616 / 249), this protein is Aminomethyltransferase.